A 537-amino-acid chain; its full sequence is DELLA protein GAI (537 aa).

The disordered stretch occupies residues 1–33 (MKRDHQEISGSGSNPAESSSIKGKLWEEDPDAG). Residues 9-20 (SGSGSNPAESSS) are compositionally biased toward low complexity. A DELLA motif motif is present at residues 37-41 (DELLA). Residues 131-157 (KSDPGLEITRKRAKTESSSSSSSTTTR) form a disordered region. Positions 147–156 (SSSSSSSTTT) are enriched in low complexity. The GRAS domain occupies 162–533 (IDSQEAGVRL…RPLIAHLGLA (372 aa)). The leucine repeat I (LRI) stretch occupies residues 169–223 (VRLVHTLMACAEAVQQDNLKLADALVKHIGLLASSQTGAMRKVATYFAEALARRI). The interval 241–306 (QIPFYETCPY…GGPPAFRLTG (66 aa)) is VHIID. The VHIID motif lies at 272–276 (VHVID). Residues 320–352 (QVGWKLAQLAERIGIEFEFRGFVANSLADLEPE) form a leucine repeat II (LRII) region. Residues 364 to 454 (VAVNAVFELH…ELYLGRQICN (91 aa)) form a PFYRE region. An LXXLL motif motif is present at residues 372–376 (LHPLL). The tract at residues 457–533 (ACEGMDRVER…RPLIAHLGLA (77 aa)) is SAW.

It belongs to the GRAS family. DELLA subfamily. In terms of processing, phosphorylated. Ubiquitinated. Upon GA application it is ubiquitinated, leading to its subsequent degradation.

The protein localises to the nucleus. Its function is as follows. Probable transcriptional regulator that acts as a repressor of the gibberellin (GA) signaling pathway. Probably acts by participating in large multiprotein complexes that represses transcription of GA-inducible genes. Upon GA application, it is degraded by the proteasome, allowing the GA signaling pathway. The sequence is that of DELLA protein GAI (GAI) from Gossypium hirsutum (Upland cotton).